The sequence spans 200 residues: Segregation and condensation protein B (200 aa).

The protein belongs to the ScpB family. In terms of assembly, homodimer. Homodimerization may be required to stabilize the binding of ScpA to the Smc head domains. Component of a cohesin-like complex composed of ScpA, ScpB and the Smc homodimer, in which ScpA and ScpB bind to the head domain of Smc. The presence of the three proteins is required for the association of the complex with DNA.

The protein resides in the cytoplasm. In terms of biological role, participates in chromosomal partition during cell division. May act via the formation of a condensin-like complex containing Smc and ScpA that pull DNA away from mid-cell into both cell halves. The chain is Segregation and condensation protein B from Lactobacillus delbrueckii subsp. bulgaricus (strain ATCC 11842 / DSM 20081 / BCRC 10696 / JCM 1002 / NBRC 13953 / NCIMB 11778 / NCTC 12712 / WDCM 00102 / Lb 14).